Consider the following 143-residue polypeptide: Hexaprenyl-diphosphate synthase small subunit ((2E,6E)-farnesyl-diphosphate specific) (143 aa).

As to quaternary structure, dimer of heterodimer or heterotetramer composed of a small (Hexs-a) and large (Hexs-B) subunit.

It carries out the reaction 3 isopentenyl diphosphate + (2E,6E)-farnesyl diphosphate = all-trans-hexaprenyl diphosphate + 3 diphosphate. Functionally, catalyzes the condensation of three molecules of isopentenyl diphosphate with farnesyl diphosphate (FPP) to yield (all-E)-hexaprenyl diphosphate (HexPP; C30), the precursor of the prenyl side chain of menaquinone-6. Large subunit Hexs-B catalyzes the condensation reaction and the final product chain length is cooperatively regulated by both the Hexs-A and Hexs-B subunits using the whole size of the hydrophobic cleft as a ruler. In Micrococcus luteus (Micrococcus lysodeikticus), this protein is Hexaprenyl-diphosphate synthase small subunit ((2E,6E)-farnesyl-diphosphate specific) (hexs-a).